The sequence spans 214 residues: Glycerol-3-phosphate acyltransferase (214 aa).

Transmembrane regions (helical) follow at residues 4–24 (LIVA…IVSA), 52–72 (AAIL…WFVV), 82–102 (DTSV…PAFF), 118–138 (LAIN…VAFF), and 159–179 (FLFG…LLVW).

Belongs to the PlsY family. Probably interacts with PlsX.

It is found in the cell inner membrane. The enzyme catalyses an acyl phosphate + sn-glycerol 3-phosphate = a 1-acyl-sn-glycero-3-phosphate + phosphate. The protein operates within lipid metabolism; phospholipid metabolism. Catalyzes the transfer of an acyl group from acyl-phosphate (acyl-PO(4)) to glycerol-3-phosphate (G3P) to form lysophosphatidic acid (LPA). This enzyme utilizes acyl-phosphate as fatty acyl donor, but not acyl-CoA or acyl-ACP. The protein is Glycerol-3-phosphate acyltransferase of Paraburkholderia xenovorans (strain LB400).